The following is a 217-amino-acid chain: D-methionine transport system permease protein MetI (217 aa).

The region spanning 13 to 204 (VWETLMMTFV…LLVILVYLIQ (192 aa)) is the ABC transmembrane type-1 domain. Transmembrane regions (helical) follow at residues 20–40 (TFVS…LLYV), 58–78 (GVVN…MIPF), 81–101 (MIVG…VGAA), 152–172 (ITLI…AGGL), and 186–206 (ATVM…IQLS).

Belongs to the binding-protein-dependent transport system permease family. CysTW subfamily.

The protein resides in the cell inner membrane. Part of the binding-protein-dependent transport system for D-methionine and the toxic methionine analog alpha-methyl-methionine. Probably responsible for the translocation of the substrate across the membrane. In Yersinia pestis, this protein is D-methionine transport system permease protein MetI (metI).